Here is a 340-residue protein sequence, read N- to C-terminus: Ketol-acid reductoisomerase (NADP(+)) (340 aa).

Residues 1 to 182 (MRVYYDRDCD…GGGRSGIIET (182 aa)) form the KARI N-terminal Rossmann domain. NADP(+) is bound by residues 24 to 27 (YGSQ), arginine 48, serine 51, serine 53, and 83 to 86 (DELQ). Histidine 108 is a catalytic residue. Residue glycine 134 participates in NADP(+) binding. The KARI C-terminal knotted domain occupies 183–329 (NFREECETDL…AKLREMMPWI (147 aa)). Aspartate 191, glutamate 195, glutamate 227, and glutamate 231 together coordinate Mg(2+). Serine 252 provides a ligand contact to substrate.

It belongs to the ketol-acid reductoisomerase family. Mg(2+) is required as a cofactor.

It carries out the reaction (2R)-2,3-dihydroxy-3-methylbutanoate + NADP(+) = (2S)-2-acetolactate + NADPH + H(+). The catalysed reaction is (2R,3R)-2,3-dihydroxy-3-methylpentanoate + NADP(+) = (S)-2-ethyl-2-hydroxy-3-oxobutanoate + NADPH + H(+). It participates in amino-acid biosynthesis; L-isoleucine biosynthesis; L-isoleucine from 2-oxobutanoate: step 2/4. Its pathway is amino-acid biosynthesis; L-valine biosynthesis; L-valine from pyruvate: step 2/4. In terms of biological role, involved in the biosynthesis of branched-chain amino acids (BCAA). Catalyzes an alkyl-migration followed by a ketol-acid reduction of (S)-2-acetolactate (S2AL) to yield (R)-2,3-dihydroxy-isovalerate. In the isomerase reaction, S2AL is rearranged via a Mg-dependent methyl migration to produce 3-hydroxy-3-methyl-2-ketobutyrate (HMKB). In the reductase reaction, this 2-ketoacid undergoes a metal-dependent reduction by NADPH to yield (R)-2,3-dihydroxy-isovalerate. The protein is Ketol-acid reductoisomerase (NADP(+)) of Ruegeria sp. (strain TM1040) (Silicibacter sp.).